The following is a 147-amino-acid chain: Calmodulin (147 aa).

4 EF-hand domains span residues 8–43 (EQIA…LGLS), 44–79 (PSEA…QLKC), 81–116 (DSEQ…IGEK), and 120–147 (AEVD…LLSK). Residues Asp21, Asp23, Ser25, Ser27, Glu32, Asp57, Asp59, Asn61, Glu68, Asp94, Asn96, Asp98, and Glu105 each coordinate Ca(2+).

Belongs to the calmodulin family.

Calmodulin mediates the control of a large number of enzymes, ion channels and other proteins by Ca(2+). Among the enzymes to be stimulated by the calmodulin-Ca(2+) complex are a number of protein kinases and phosphatases. In Kluyveromyces lactis (strain ATCC 8585 / CBS 2359 / DSM 70799 / NBRC 1267 / NRRL Y-1140 / WM37) (Yeast), this protein is Calmodulin (CMD1).